The chain runs to 484 residues: Protein nucleotidyltransferase YdiU (484 aa).

ATP is bound by residues Gly-92, Gly-94, Arg-95, Lys-115, Asp-127, Gly-128, Arg-178, and Arg-185. Catalysis depends on Asp-258, which acts as the Proton acceptor. Asn-259 and Asp-268 together coordinate Mg(2+). Asp-268 is an ATP binding site.

It belongs to the SELO family. Mg(2+) serves as cofactor. It depends on Mn(2+) as a cofactor.

It carries out the reaction L-seryl-[protein] + ATP = 3-O-(5'-adenylyl)-L-seryl-[protein] + diphosphate. It catalyses the reaction L-threonyl-[protein] + ATP = 3-O-(5'-adenylyl)-L-threonyl-[protein] + diphosphate. The catalysed reaction is L-tyrosyl-[protein] + ATP = O-(5'-adenylyl)-L-tyrosyl-[protein] + diphosphate. The enzyme catalyses L-histidyl-[protein] + UTP = N(tele)-(5'-uridylyl)-L-histidyl-[protein] + diphosphate. It carries out the reaction L-seryl-[protein] + UTP = O-(5'-uridylyl)-L-seryl-[protein] + diphosphate. It catalyses the reaction L-tyrosyl-[protein] + UTP = O-(5'-uridylyl)-L-tyrosyl-[protein] + diphosphate. Nucleotidyltransferase involved in the post-translational modification of proteins. It can catalyze the addition of adenosine monophosphate (AMP) or uridine monophosphate (UMP) to a protein, resulting in modifications known as AMPylation and UMPylation. The chain is Protein nucleotidyltransferase YdiU from Mycolicibacterium smegmatis (strain ATCC 700084 / mc(2)155) (Mycobacterium smegmatis).